The following is a 404-amino-acid chain: Cysteine desulfurase IscS (404 aa).

Pyridoxal 5'-phosphate-binding positions include 75 to 76 (AT), N155, Q183, and 203 to 205 (SGH). Position 206 is an N6-(pyridoxal phosphate)lysine (K206). Position 243 (T243) interacts with pyridoxal 5'-phosphate. The Cysteine persulfide intermediate role is filled by C328. C328 contributes to the [2Fe-2S] cluster binding site.

It belongs to the class-V pyridoxal-phosphate-dependent aminotransferase family. NifS/IscS subfamily. In terms of assembly, homodimer. Forms a heterotetramer with IscU, interacts with other sulfur acceptors. The cofactor is pyridoxal 5'-phosphate.

The protein resides in the cytoplasm. The enzyme catalyses (sulfur carrier)-H + L-cysteine = (sulfur carrier)-SH + L-alanine. The protein operates within cofactor biosynthesis; iron-sulfur cluster biosynthesis. Functionally, master enzyme that delivers sulfur to a number of partners involved in Fe-S cluster assembly, tRNA modification or cofactor biosynthesis. Catalyzes the removal of elemental sulfur atoms from cysteine to produce alanine. Functions as a sulfur delivery protein for Fe-S cluster synthesis onto IscU, an Fe-S scaffold assembly protein, as well as other S acceptor proteins. The protein is Cysteine desulfurase IscS of Actinobacillus succinogenes (strain ATCC 55618 / DSM 22257 / CCUG 43843 / 130Z).